Consider the following 465-residue polypeptide: Gamma-aminobutyric acid receptor subunit rho-2 (465 aa).

Positions 1–20 (MPYFSRLILFLFCLVVLVES) are cleaved as a signal peptide. The Extracellular portion of the chain corresponds to 21–260 (RKPKKRRWTG…LYINFTLRRH (240 aa)). R105 serves as a coordination point for 4-aminobutanoate. N120 carries N-linked (GlcNAc...) asparagine glycosylation. S169 serves as a coordination point for 4-aminobutanoate. An intrachain disulfide couples C178 to C192. E197 is a 4-aminobutanoate binding site. N254 carries an N-linked (GlcNAc...) asparagine glycan. The helical transmembrane segment at 261 to 281 (IFFFLLQTYFPATLMVMLSWV) threads the bilayer. Over 282–293 (SFWIDRRAVPAR) the chain is Cytoplasmic. Residues 294–314 (VSLGITTVLTMSTIITGVNAS) traverse the membrane as a helical segment. Over 315–325 (MPRVSYIKAVD) the chain is Extracellular. The chain crosses the membrane as a helical span at residues 326–346 (IYLWVSFVFVFLSVLEYAAVN). Residues 347–444 (YLTTVQERKE…FQNTHAIDKY (98 aa)) are Cytoplasmic-facing. The helical transmembrane segment at 445 to 465 (SRLIFPASYIFFNLIYWSVFA) threads the bilayer.

This sequence belongs to the ligand-gated ion channel (TC 1.A.9) family. Gamma-aminobutyric acid receptor (TC 1.A.9.5) subfamily. GABRR2 sub-subfamily. Three rho subunits (rho-1/GBRR1, rho-2/GBRR2 and rho-3/GBRR3) coassemble either to form functional homopentamers or heteropentamers. Rho-2 is unable to form a functional homopentamer. Interacts with SQSTM1.

The protein localises to the postsynaptic cell membrane. The protein resides in the cell membrane. It catalyses the reaction chloride(in) = chloride(out). In terms of biological role, rho subunit of the pentameric ligand-gated chloride channels responsible for mediating the effects of gamma-aminobutyric acid (GABA), the major inhibitory neurotransmitter in the brain. Rho-containing GABA-gated chloride channels are a subclass of GABA(A) receptors (GABAARs) entirely composed of rho subunits, where GABA molecules bind at the rho intersubunit interfaces. When activated by GABA, rho-GABAARs selectively allow the flow of chloride anions across the cell membrane down their electrochemical gradient. Rho-2 GABAARs may contribute to the regulation of glial development in the cerebellum by controlling extrasynaptic transmission. Rho-2 GABAARs are also involved in neuronal tonic (extrasynaptic) and phasic (synaptic) transmission in the Purkinje neurons of the cerebellum. Rho-2 GABAARs expressed in retina may play a role in retinal neurotransmission. The polypeptide is Gamma-aminobutyric acid receptor subunit rho-2 (GABRR2) (Bos taurus (Bovine)).